A 388-amino-acid chain; its full sequence is tRNA (guanine(26)-N(2))-dimethyltransferase (388 aa).

In terms of domain architecture, Trm1 methyltransferase spans 4-383; it reads RTIVEGTTKI…APIAEIKKII (380 aa). S-adenosyl-L-methionine contacts are provided by R41, R78, D94, and A123. 4 residues coordinate Zn(2+): C251, C254, C271, and C274.

This sequence belongs to the class I-like SAM-binding methyltransferase superfamily. Trm1 family.

The catalysed reaction is guanosine(26) in tRNA + 2 S-adenosyl-L-methionine = N(2)-dimethylguanosine(26) in tRNA + 2 S-adenosyl-L-homocysteine + 2 H(+). Functionally, dimethylates a single guanine residue at position 26 of a number of tRNAs using S-adenosyl-L-methionine as donor of the methyl groups. This chain is tRNA (guanine(26)-N(2))-dimethyltransferase, found in Methanosarcina mazei (strain ATCC BAA-159 / DSM 3647 / Goe1 / Go1 / JCM 11833 / OCM 88) (Methanosarcina frisia).